Consider the following 308-residue polypeptide: Energy-coupling factor transporter ATP-binding protein EcfA2 (308 aa).

Residues 3–263 (IEVKNISKVF…VDFLRENEME (261 aa)) enclose the ABC transporter domain. 40 to 47 (GPTGSGKT) contacts ATP.

The protein belongs to the ABC transporter superfamily. Energy-coupling factor EcfA family. Forms a stable energy-coupling factor (ECF) transporter complex composed of 2 membrane-embedded substrate-binding proteins (S component), 2 ATP-binding proteins (A component) and 2 transmembrane proteins (T component).

It localises to the cell membrane. ATP-binding (A) component of a common energy-coupling factor (ECF) ABC-transporter complex. Unlike classic ABC transporters this ECF transporter provides the energy necessary to transport a number of different substrates. The sequence is that of Energy-coupling factor transporter ATP-binding protein EcfA2 from Mycoplasma mobile (strain ATCC 43663 / 163K / NCTC 11711) (Mesomycoplasma mobile).